The sequence spans 358 residues: Peptide chain release factor 1 (358 aa).

Residue Gln235 is modified to N5-methylglutamine. The tract at residues 284-309 (KVESERSASRKSQVGSGDRSERIRTY) is disordered.

The protein belongs to the prokaryotic/mitochondrial release factor family. Methylated by PrmC. Methylation increases the termination efficiency of RF1.

It is found in the cytoplasm. Functionally, peptide chain release factor 1 directs the termination of translation in response to the peptide chain termination codons UAG and UAA. This is Peptide chain release factor 1 from Bartonella tribocorum (strain CIP 105476 / IBS 506).